The chain runs to 247 residues: tRNA (guanine-N(1)-)-methyltransferase (247 aa).

S-adenosyl-L-methionine is bound by residues G112 and 131 to 136 (LGDFVL).

Belongs to the RNA methyltransferase TrmD family. As to quaternary structure, homodimer.

It localises to the cytoplasm. It catalyses the reaction guanosine(37) in tRNA + S-adenosyl-L-methionine = N(1)-methylguanosine(37) in tRNA + S-adenosyl-L-homocysteine + H(+). Specifically methylates guanosine-37 in various tRNAs. The protein is tRNA (guanine-N(1)-)-methyltransferase of Syntrophotalea carbinolica (strain DSM 2380 / NBRC 103641 / GraBd1) (Pelobacter carbinolicus).